We begin with the raw amino-acid sequence, 1197 residues long: PAN2-PAN3 deadenylation complex catalytic subunit PAN2 (1197 aa).

WD repeat units lie at residues 153 to 193 (DEAE…QKYT), 195 to 231 (EVPG…VEHE), 244 to 280 (VHGN…ATTP), and 328 to 367 (TVGP…TFNT). The segment at 368 to 485 (YSRETDFALP…IGREEEPHLY (118 aa)) is linker. A USP domain is found at 486–919 (MVAKKYRKVT…VPAILYYARR (434 aa)). An Exonuclease domain is found at 970-1142 (VGLDAEFVTL…EDARTALQLY (173 aa)). 4 residues coordinate a divalent metal cation: D973, E975, D1082, and D1134. A disordered region spans residues 1176–1197 (VPEPDSQSSPKHGAVFPPVLAL).

Belongs to the peptidase C19 family. PAN2 subfamily. In terms of assembly, forms a heterotrimer with an asymmetric homodimer of the regulatory subunit PAN3 to form the poly(A)-nuclease (PAN) deadenylation complex. A divalent metal cation serves as cofactor.

The protein localises to the cytoplasm. Its subcellular location is the P-body. The protein resides in the nucleus. The catalysed reaction is Exonucleolytic cleavage of poly(A) to 5'-AMP.. With respect to regulation, positively regulated by the regulatory subunit PAN3. Functionally, catalytic subunit of the poly(A)-nuclease (PAN) deadenylation complex, one of two cytoplasmic mRNA deadenylases involved in general and miRNA-mediated mRNA turnover. PAN specifically shortens poly(A) tails of RNA and the activity is stimulated by poly(A)-binding protein (PABP). PAN deadenylation is followed by rapid degradation of the shortened mRNA tails by the CCR4-NOT complex. Deadenylated mRNAs are then degraded by two alternative mechanisms, namely exosome-mediated 3'-5' exonucleolytic degradation, or deadenylation-dependent mRNA decaping and subsequent 5'-3' exonucleolytic degradation by XRN1. This Gallus gallus (Chicken) protein is PAN2-PAN3 deadenylation complex catalytic subunit PAN2.